The following is a 260-amino-acid chain: Snake venom serine protease homolog 2 (260 aa).

The first 18 residues, 1–18, serve as a signal peptide directing secretion; that stretch reads MVLIRVLANLLVLQLSYA. Positions 19 to 24 are excised as a propeptide; it reads QKSSEL. The Peptidase S1 domain maps to 25–251; sequence VIGGDECNIN…YTDWIQSIIA (227 aa). 6 disulfides stabilise this stretch: C31–C165, C52–C68, C100–C258, C144–C212, C176–C191, and C202–C227. Residue N123 is glycosylated (N-linked (GlcNAc...) asparagine). An N-linked (GlcNAc...) asparagine glycan is attached at N253.

It belongs to the peptidase S1 family. Snake venom subfamily. In terms of tissue distribution, expressed by the venom gland.

It localises to the secreted. Snake venom serine protease homolog that may act in the hemostasis system of the prey. In Macrovipera lebetinus (Levantine viper), this protein is Snake venom serine protease homolog 2.